A 376-amino-acid polypeptide reads, in one-letter code: Queuine tRNA-ribosyltransferase (376 aa).

D90 functions as the Proton acceptor in the catalytic mechanism. Substrate-binding positions include 90 to 94 (DSGGF), D144, Q193, and G220. The tract at residues 251–257 (GVGTPED) is RNA binding. Catalysis depends on D270, which acts as the Nucleophile. Positions 275 to 279 (TRNAR) are RNA binding; important for wobble base 34 recognition. The Zn(2+) site is built by C308, C310, C313, and H339.

The protein belongs to the queuine tRNA-ribosyltransferase family. Homodimer. Within each dimer, one monomer is responsible for RNA recognition and catalysis, while the other monomer binds to the replacement base PreQ1. Zn(2+) serves as cofactor.

It catalyses the reaction 7-aminomethyl-7-carbaguanine + guanosine(34) in tRNA = 7-aminomethyl-7-carbaguanosine(34) in tRNA + guanine. It participates in tRNA modification; tRNA-queuosine biosynthesis. In terms of biological role, catalyzes the base-exchange of a guanine (G) residue with the queuine precursor 7-aminomethyl-7-deazaguanine (PreQ1) at position 34 (anticodon wobble position) in tRNAs with GU(N) anticodons (tRNA-Asp, -Asn, -His and -Tyr). Catalysis occurs through a double-displacement mechanism. The nucleophile active site attacks the C1' of nucleotide 34 to detach the guanine base from the RNA, forming a covalent enzyme-RNA intermediate. The proton acceptor active site deprotonates the incoming PreQ1, allowing a nucleophilic attack on the C1' of the ribose to form the product. After dissociation, two additional enzymatic reactions on the tRNA convert PreQ1 to queuine (Q), resulting in the hypermodified nucleoside queuosine (7-(((4,5-cis-dihydroxy-2-cyclopenten-1-yl)amino)methyl)-7-deazaguanosine). The polypeptide is Queuine tRNA-ribosyltransferase (Cupriavidus metallidurans (strain ATCC 43123 / DSM 2839 / NBRC 102507 / CH34) (Ralstonia metallidurans)).